The primary structure comprises 146 residues: Cytochrome c-type biogenesis protein CcmE (146 aa).

The Cytoplasmic portion of the chain corresponds to 1 to 8 (MNPRRKKR). The helical; Signal-anchor for type II membrane protein transmembrane segment at 9–29 (LGLILALVLGASATVGLMLYA) threads the bilayer. Residues 30-146 (LNQNMDLFYT…EVAEAMKKTH (117 aa)) lie on the Periplasmic side of the membrane. Heme contacts are provided by His129 and Tyr133.

The protein belongs to the CcmE/CycJ family.

It localises to the cell inner membrane. Its function is as follows. Heme chaperone required for the biogenesis of c-type cytochromes. Transiently binds heme delivered by CcmC and transfers the heme to apo-cytochromes in a process facilitated by CcmF and CcmH. The sequence is that of Cytochrome c-type biogenesis protein CcmE from Aliivibrio salmonicida (strain LFI1238) (Vibrio salmonicida (strain LFI1238)).